The chain runs to 269 residues: Chymotrypsin-like elastase family member 2A (269 aa).

An N-terminal signal peptide occupies residues 1-16 (MIRALLLSTLVAGALS). The propeptide at 17 to 28 (CGVPTYPPQLSR) is activation peptide. The region spanning 29–267 (VVGGEDARPN…YNDWISSVIE (239 aa)) is the Peptidase S1 domain. Residues cysteine 58 and cysteine 74 are joined by a disulfide bond. Catalysis depends on charge relay system residues histidine 73 and aspartate 121. 3 disulfides stabilise this stretch: cysteine 155/cysteine 222, cysteine 186/cysteine 202, and cysteine 212/cysteine 243. Serine 216 serves as the catalytic Charge relay system.

This sequence belongs to the peptidase S1 family. Elastase subfamily. In terms of assembly, interacts with CPA1. Interacts with SERPINA1. In terms of tissue distribution, pancreas.

It is found in the secreted. The enzyme catalyses Preferential cleavage: Leu-|-Xaa, Met-|-Xaa and Phe-|-Xaa. Hydrolyzes elastin.. In terms of biological role, elastase that enhances insulin signaling and might have a physiologic role in cellular glucose metabolism. Circulates in plasma and reduces platelet hyperactivation, triggers both insulin secretion and degradation, and increases insulin sensitivity. In Bos taurus (Bovine), this protein is Chymotrypsin-like elastase family member 2A (CELA2A).